Reading from the N-terminus, the 101-residue chain is Citrate lyase acyl carrier protein (101 aa).

Position 14 is an O-(phosphoribosyl dephospho-coenzyme A)serine (S14).

This sequence belongs to the CitD family. In terms of assembly, oligomer with a subunit composition of (alpha,beta,gamma)6.

The protein localises to the cytoplasm. Functionally, covalent carrier of the coenzyme of citrate lyase. In Lacticaseibacillus casei (strain BL23) (Lactobacillus casei), this protein is Citrate lyase acyl carrier protein.